Reading from the N-terminus, the 372-residue chain is MWPFASVPAGAKCRLVETLPENMDFRSDHLTTFECFNEIITLAKKYIYIASFCCNPLSTTRGALIFDKLKEASEKGIKIIVLLDERGKRNLGELQSHCPDINFITVNIDKKNNVGLLLGCFWVSDDERCYVGNASFTGGSIHTIKTLGVYSDYPPLATDLRRRFDTFKAFNSAKNSWLNLCSAACCLPVSTAYHIKNPIGGVFFTDSPEHLLGYSRDLDTDVVIDKLKSAKTSIDIEHLAIVPTTRVDGNSYYWPDIYNSIIEAAINRGVKIRLLVGNWDKNDVYSMATARSLDALCVQNDLSVKVFTIQNNTKLLIVDDEYVHITSANFDGTHYQNHGFVSFNSIDKQLVSEAKKIFERDWVSSHSKSLKI.

Positions 153–156 (YPPL) match the YPPL motif. S-palmitoyl cysteine; by host attachment occurs at residues Cys-185 and Cys-186. The region spanning 307 to 334 (FTIQNNTKLLIVDDEYVHITSANFDGTH) is the PLD phosphodiesterase domain.

This sequence belongs to the orthopoxvirus OPG057 family. Interacts with protein OPG190/B5. Palmitoylated. Attachment of the palmitate moiety is essential for correct intracellular targeting and protein function.

The protein localises to the virion membrane. Its subcellular location is the host Golgi apparatus. It localises to the host trans-Golgi network. The protein resides in the host endoplasmic reticulum membrane. It catalyses the reaction a 1,2-diacyl-sn-glycero-3-phosphocholine + H2O = a 1,2-diacyl-sn-glycero-3-phosphate + choline + H(+). Its function is as follows. Major envelope protein that plays a role in the biogenesis of the viral double membrane and in egress of virus from the host cell. Produces the wrapped form of virus that is required for cell-to-cell spread. Acts as a lipase with broad specificity including phospholipase C, phospholipase A, and triacylglycerol lipase activities. The protein is Envelope phospholipase OPG057 (OPG057) of Vaccinia virus (strain Western Reserve) (VACV).